Here is a 344-residue protein sequence, read N- to C-terminus: Putative glycosyltransferase EpsH (344 aa).

This sequence belongs to the glycosyltransferase 2 family.

Functionally, may be involved in the production of the exopolysaccharide (EPS) component of the extracellular matrix during biofilm formation. EPS is responsible for the adhesion of chains of cells into bundles. Required for biofilm maintenance. This is Putative glycosyltransferase EpsH (epsH) from Bacillus subtilis (strain 168).